The chain runs to 229 residues: Acetate kinase EutQ (229 aa).

The tract at residues 1–100 (MKKLITANDI…EKVLKEKQSL (100 aa)) is required for interaction with EutM.

This sequence belongs to the EutQ cupin-like family. In terms of assembly, homodimer. Interacts with the N-terminus of EutM; a probably cytoplasm-facing helix (EutM 'Val-49' to 'Gln-64') interacts with N-terminus of EutQ. Requires Does not need divalent cations. as cofactor.

Its subcellular location is the bacterial microcompartment. The catalysed reaction is acetate + ATP = acetyl phosphate + ADP. The protein operates within amine and polyamine degradation; ethanolamine degradation. In terms of biological role, a bidirectional acetate kinase that may drive flux through the ethanolamine (EA) degradation pathway under anoxic conditions found when this bacteria infects the host intestine. It may generate ATP that can be used by other enzymes (EutA and EutT) in the eut pathway. Can use GTP instead of ATP with reduced efficiency. Might be required to correctly target EutE to bacterial microcompartments (BMC). Required for the biogenesis of multiple mobile BMCs per cell. Might serve as an assembly hub for BMC shell proteins. Expression of eutK, eutL, eutM, eutN, eutS (eutSMNLK) in E.coli leads to formation of a single BMC; coexpression of eutQ with eutSMNLK permits E.coli to make cells with more than one mobile BMC, as is usual in vivo. EutS alone also forms BMCs, but in the presence of eutQ both BMCs and protein filaments are formed. Expression of the eut operon allows this bacteria to use ethanolamine (EA) as a carbon, nitrogen and energy source. It relies on cobalamin (vitamin B12) both as a cofactor for the ethanolamine ammonia-lyase (EAL) activity and to induce the operon. EA enhances bacterial survival in macrophages in a concentration-dependent manner, suggesting it is an important nutrient during infection. The sequence is that of Acetate kinase EutQ (eutQ) from Salmonella typhimurium (strain LT2 / SGSC1412 / ATCC 700720).